The primary structure comprises 719 residues: MTEPTITDDIIKAHGFTDDEYAEVNKILGRAPNYTEMGIFSAMWNEHCSYKSSKKWLRTLPTEGPQVICGPGENAGIVDIGDGQCVVFKMESHNHPSYIEPYQGAATGVGGILRDVFTMGARPIAAMNSLSFGEVAHPKTRQLVHGVVEGVGGYGNCFGVPTIGGEVRFHPAYNGNCLVNAFAAGLADTDKIFYSAASGVGMPVVYLGAKTGRDGVGGATMASAEFDDTIEEKRPTVQVGDPFTEKRLLEATLELMASGAVISIQDMGAAGLTCSAVEMGDKGGLGIRLNLDAVPIREDAMTAYEMMLSESQERMLMVLKPELEDTARAIFEKWDLDFAVVGETIPEDRFVIVHNGETKADLPLSKLASTAPEYDRPWVPTDPAHDMDAVPEVDPIDALRALLFSPNYCSRQWVYQQYDHQVMGDTVMSPGLGAGVVRVHGTDKALAFTSDVTPRYVKANPVEGGKQAVAEAYRNLTAVGAKPLATTDNMNFGNPEKPEIMGQFVGAIKGIGEACLALDTPIVSGNVSLYNETDGTGILPTPTIGAVGLLSSMDDLIAGTARDGHVLLLVGDTNGHLGQSALLAEVFNREDGDAPHVDLGAEKRNGDFIRDNRDWIGACTDLSDGGLALAAFEVAHAAGCGITLDVGDTATLFGEDQARYLISTSFDAAEALMVAAGRAGVPLATVGKVGGASLRIGTSEAPLADLSATYTNAFSQTFA.

Residue H47 is part of the active site. ATP contacts are provided by Y50 and K89. Mg(2+) is bound at residue E91. Residues 92–95 (SHNH) and R114 contribute to the substrate site. H93 functions as the Proton acceptor in the catalytic mechanism. Residue D115 coordinates Mg(2+). Q238 lines the substrate pocket. D266 lines the Mg(2+) pocket. 310-312 (ESQ) lines the substrate pocket. 2 residues coordinate ATP: D488 and G525. Mg(2+) is bound at residue N526. S528 is a binding site for substrate.

This sequence belongs to the FGAMS family. In terms of assembly, monomer. Part of the FGAM synthase complex composed of 1 PurL, 1 PurQ and 2 PurS subunits.

Its subcellular location is the cytoplasm. The catalysed reaction is N(2)-formyl-N(1)-(5-phospho-beta-D-ribosyl)glycinamide + L-glutamine + ATP + H2O = 2-formamido-N(1)-(5-O-phospho-beta-D-ribosyl)acetamidine + L-glutamate + ADP + phosphate + H(+). It participates in purine metabolism; IMP biosynthesis via de novo pathway; 5-amino-1-(5-phospho-D-ribosyl)imidazole from N(2)-formyl-N(1)-(5-phospho-D-ribosyl)glycinamide: step 1/2. Functionally, part of the phosphoribosylformylglycinamidine synthase complex involved in the purines biosynthetic pathway. Catalyzes the ATP-dependent conversion of formylglycinamide ribonucleotide (FGAR) and glutamine to yield formylglycinamidine ribonucleotide (FGAM) and glutamate. The FGAM synthase complex is composed of three subunits. PurQ produces an ammonia molecule by converting glutamine to glutamate. PurL transfers the ammonia molecule to FGAR to form FGAM in an ATP-dependent manner. PurS interacts with PurQ and PurL and is thought to assist in the transfer of the ammonia molecule from PurQ to PurL. This chain is Phosphoribosylformylglycinamidine synthase subunit PurL, found in Jannaschia sp. (strain CCS1).